A 521-amino-acid chain; its full sequence is MSRFARGITIVWVVLRYGLDELVLSTFRQPWLRAVTRVITFGRKLDAPRGQRLREALESLGPIFVKFGQVLSTRRDLMPPDIADELALLQDRVPPFDPDVAIATIERAFRRPIGEVFVSFDRQPVASASIAQVHFAVIRDRQGHAREVAVKVLRPGMLPVIDKDLALMRMMAGWVESLSADGKRLKPREVVAEFDNYLHDELDLVREAANAAQLRRNMQGLDLVLIPEVFWDFCHAEVLVMERMKGVPINQVDRLRSAGVDIPKLARDGVTIFFTQVFRDGFFHADMHPGNIQVSLAPETFGRYISLDFGIVGTLTEFDKEYLAQNFTAFFRRDYKRVAELHIESGWVPAHTRVNELEAAIRTVCEPYFDRPLKEISLGMVLLRLFQTSRRFQVEIQPQLVLLQKTLLNIEGLGRQLDPDLDLWSTAKPFLEKWMLDQLGPQRLWRELRAEAPHYAKILPDLPRLLHDFLRQRPNDNRVDLQELLATQKRTNRLLQSLIYGGLGFVLGLLVMQLFVRVRIF.

The region spanning 119-497 (SFDRQPVASA…QKRTNRLLQS (379 aa)) is the Protein kinase domain. ATP-binding positions include 125–133 (VASASIAQV) and lysine 151. Aspartate 286 serves as the catalytic Proton acceptor. A helical transmembrane segment spans residues 496 to 516 (QSLIYGGLGFVLGLLVMQLFV).

The protein belongs to the ABC1 family. UbiB subfamily.

The protein resides in the cell inner membrane. It participates in cofactor biosynthesis; ubiquinone biosynthesis [regulation]. In terms of biological role, is probably a protein kinase regulator of UbiI activity which is involved in aerobic coenzyme Q (ubiquinone) biosynthesis. In Acidovorax sp. (strain JS42), this protein is Probable protein kinase UbiB.